The chain runs to 942 residues: E3 ubiquitin-protein ligase HACE1 (942 aa).

ANK repeat units follow at residues 23–55 (LPDD…NSKF), 64–93 (VKRS…NPNY), 97–126 (SGCT…DVNI), 130–159 (EGLT…NVDV), 163–192 (MGQT…DINR), 196–226 (SGAT…YLPD), and 228–253 (NGIT…QYHP). The tract at residues 428-459 (KGPDHQDATPTPSFAAAGTESRKELSTDTGDS) is disordered. Residues 447 to 459 (ESRKELSTDTGDS) show a composition bias toward basic and acidic residues. Residues 607 to 942 (NCAKLKQGIA…HCGSYGYTMA (336 aa)) enclose the HECT domain. Catalysis depends on cysteine 909, which acts as the Glycyl thioester intermediate.

The protein localises to the golgi apparatus. It is found in the golgi stack membrane. Its subcellular location is the cytoplasm. The protein resides in the endoplasmic reticulum. It catalyses the reaction S-ubiquitinyl-[E2 ubiquitin-conjugating enzyme]-L-cysteine + [acceptor protein]-L-lysine = [E2 ubiquitin-conjugating enzyme]-L-cysteine + N(6)-ubiquitinyl-[acceptor protein]-L-lysine.. Its pathway is protein modification; protein ubiquitination. Its function is as follows. E3 ubiquitin-protein ligase involved in Golgi membrane fusion and regulation of small GTPases. Acts as a regulator of Golgi membrane dynamics during the cell cycle: recruited to Golgi membrane by Rab proteins and regulates postmitotic Golgi membrane fusion. Acts by mediating ubiquitination during mitotic Golgi disassembly, ubiquitination serving as a signal for Golgi reassembly later, after cell division. This is E3 ubiquitin-protein ligase HACE1 (HACE1) from Gallus gallus (Chicken).